Consider the following 83-residue polypeptide: MGMRMMFTLFLLAVLSTTVVSFTLDRASNGRDAAADSKAADQIAQTVRDECCSNPSCAQTHPEICRRTLMLQNPLNHDMSPSA.

The first 21 residues, 1–21 (MGMRMMFTLFLLAVLSTTVVS), serve as a signal peptide directing secretion. Residues 22 to 48 (FTLDRASNGRDAAADSKAADQIAQTVR) constitute a propeptide that is removed on maturation. Cystine bridges form between C51-C57 and C52-C65. Residues 53–55 (SNP) are ser-Xaa-Pro motif, crucial for potent interaction with nAChR. Residues 66–83 (RRTLMLQNPLNHDMSPSA) constitute a propeptide that is removed on maturation.

It belongs to the conotoxin A superfamily. In terms of tissue distribution, expressed by the venom duct.

Its subcellular location is the secreted. Functionally, alpha-conotoxins bind to the nicotinic acetylcholine receptors (nAChR) and inhibit them. A synthetic amidated version of this toxin potently and preferentially antagonizes neuronal rat alpha-3-beta-2 (IC(50)=55.7 nM) and alpha-6/alpha-3-beta-4 (IC(50)=90.69 nM) nAChRs. This is Alpha-conotoxin QcIA from Conus quercinus (Oak cone).